We begin with the raw amino-acid sequence, 228 residues long: Geranylgeranylglyceryl phosphate synthase (228 aa).

Residue Lys14 coordinates sn-glycerol 1-phosphate. The Mg(2+) site is built by Asp16 and Thr42. Residues 160–165 (YIEYSG), Gly190, and 210–211 (GN) contribute to the sn-glycerol 1-phosphate site.

Belongs to the GGGP/HepGP synthase family. Group I subfamily. Requires Mg(2+) as cofactor.

Its subcellular location is the cytoplasm. It catalyses the reaction sn-glycerol 1-phosphate + (2E,6E,10E)-geranylgeranyl diphosphate = sn-3-O-(geranylgeranyl)glycerol 1-phosphate + diphosphate. The protein operates within membrane lipid metabolism; glycerophospholipid metabolism. Functionally, prenyltransferase that catalyzes the transfer of the geranylgeranyl moiety of geranylgeranyl diphosphate (GGPP) to the C3 hydroxyl of sn-glycerol-1-phosphate (G1P). This reaction is the first ether-bond-formation step in the biosynthesis of archaeal membrane lipids. The chain is Geranylgeranylglyceryl phosphate synthase from Methanocella arvoryzae (strain DSM 22066 / NBRC 105507 / MRE50).